The following is a 291-amino-acid chain: N-acetylmannosamine kinase (291 aa).

Residues 5–12 (AIDIGGTK) and 132–139 (GVGGGVVS) contribute to the ATP site. Residues His-156, Cys-166, Cys-168, and Cys-173 each contribute to the Zn(2+) site.

It belongs to the ROK (NagC/XylR) family. NanK subfamily. In terms of assembly, homodimer.

It carries out the reaction an N-acyl-D-mannosamine + ATP = an N-acyl-D-mannosamine 6-phosphate + ADP + H(+). It functions in the pathway amino-sugar metabolism; N-acetylneuraminate degradation; D-fructose 6-phosphate from N-acetylneuraminate: step 2/5. In terms of biological role, catalyzes the phosphorylation of N-acetylmannosamine (ManNAc) to ManNAc-6-P. The protein is N-acetylmannosamine kinase of Escherichia coli O127:H6 (strain E2348/69 / EPEC).